The primary structure comprises 153 residues: Small ribosomal subunit protein uS5 (153 aa).

One can recognise an S5 DRBM domain in the interval 15-78 (FQEVVVNIGR…DDAFKNLIHV (64 aa)).

This sequence belongs to the universal ribosomal protein uS5 family. In terms of assembly, part of the 30S ribosomal subunit. Contacts proteins S4 and S8.

With S4 and S12 plays an important role in translational accuracy. Its function is as follows. Located at the back of the 30S subunit body where it stabilizes the conformation of the head with respect to the body. In Helicobacter pylori (strain P12), this protein is Small ribosomal subunit protein uS5.